A 396-amino-acid chain; its full sequence is Deoxyguanosinetriphosphate triphosphohydrolase-like protein (396 aa).

In terms of domain architecture, HD spans 69-211; the sequence is RLSHSLEVSQ…AALADDIAYN (143 aa).

Belongs to the dGTPase family. Type 2 subfamily.

This is Deoxyguanosinetriphosphate triphosphohydrolase-like protein from Parvibaculum lavamentivorans (strain DS-1 / DSM 13023 / NCIMB 13966).